The chain runs to 92 residues: MTRSLKKNPFVVDHLSGKIEKLNMREEKEIIVTWSRGSTIIPAMMGHTIAIHNGKEHFPIYITDQMVGHKLGEFSPTLTFARHTRNDNKSRR.

This sequence belongs to the universal ribosomal protein uS19 family.

The protein localises to the plastid. The protein resides in the chloroplast. In terms of biological role, protein S19 forms a complex with S13 that binds strongly to the 16S ribosomal RNA. The polypeptide is Small ribosomal subunit protein uS19c (Dioscorea elephantipes (Elephant's foot yam)).